Here is a 568-residue protein sequence, read N- to C-terminus: Tyrosine-protein kinase transforming protein Src (568 aa).

The segment at 1-58 (MGSSKSKPKDPSQRRRSLEPPDSTHHGGFPASQTPNKTAAPDTHRTPSRSFGTVATEP) is disordered. Gly-2 carries the N-myristoyl glycine; by host lipid modification. Residues 7-25 (KPKDPSQRRRSLEPPDSTH) show a composition bias toward basic and acidic residues. One can recognise an SH3 domain in the interval 81 to 142 (GGVTTFVALY…PSNYVAPSDS (62 aa)). Residues 148-245 (WYFGKITRRE…GLCHRLTNVC (98 aa)) enclose the SH2 domain. In terms of domain architecture, Protein kinase spans 267–520 (LRLEVKLGQG…YLQAFLEDYF (254 aa)). ATP contacts are provided by residues 273–281 (LGQGCFGEV) and Lys-295. Asp-386 functions as the Proton acceptor in the catalytic mechanism. Tyr-416 carries the phosphotyrosine; by autocatalysis modification.

The protein belongs to the protein kinase superfamily. Tyr protein kinase family. SRC subfamily. In terms of processing, the phosphorylated form is termed pp60v-src.

It carries out the reaction L-tyrosyl-[protein] + ATP = O-phospho-L-tyrosyl-[protein] + ADP + H(+). Functionally, this phosphoprotein, required for both the initiation and the maintenance of neoplastic transformation, is a protein kinase that catalyzes the phosphorylation of tyrosine residues in vitro. The protein is Tyrosine-protein kinase transforming protein Src (V-SRC) of Galliformes.